The chain runs to 778 residues: Endonuclease MutS2 (778 aa).

329-336 (GPNTGGKT) is an ATP binding site. The region spanning 703–778 (LDLRGKRYEE…GSGCTIVTFK (76 aa)) is the Smr domain.

Belongs to the DNA mismatch repair MutS family. MutS2 subfamily. As to quaternary structure, homodimer. Binds to stalled ribosomes, contacting rRNA.

Endonuclease that is involved in the suppression of homologous recombination and thus may have a key role in the control of bacterial genetic diversity. In terms of biological role, acts as a ribosome collision sensor, splitting the ribosome into its 2 subunits. Detects stalled/collided 70S ribosomes which it binds and splits by an ATP-hydrolysis driven conformational change. Acts upstream of the ribosome quality control system (RQC), a ribosome-associated complex that mediates the extraction of incompletely synthesized nascent chains from stalled ribosomes and their subsequent degradation. Probably generates substrates for RQC. In Streptococcus suis (strain 98HAH33), this protein is Endonuclease MutS2.